Reading from the N-terminus, the 323-residue chain is RING-H2 finger protein ATL32 (323 aa).

The N-terminal stretch at 1 to 28 (MMTRVECFNPHRWIILHVAIIIQSKANA) is a signal peptide. The helical transmembrane segment at 47-67 (TTVFAVLVTLFFLTGLLSVYI) threads the bilayer. The RING-type; atypical zinc finger occupies 124-166 (CAICLNELEDHETVRLLPICNHLFHIDCIDTWLYSHATCPVCR). A disordered region spans residues 210 to 229 (SSEISGKFPRSNSTGHSMDR).

This sequence belongs to the RING-type zinc finger family. ATL subfamily.

The protein resides in the membrane. It carries out the reaction S-ubiquitinyl-[E2 ubiquitin-conjugating enzyme]-L-cysteine + [acceptor protein]-L-lysine = [E2 ubiquitin-conjugating enzyme]-L-cysteine + N(6)-ubiquitinyl-[acceptor protein]-L-lysine.. It participates in protein modification; protein ubiquitination. The chain is RING-H2 finger protein ATL32 (ATL32) from Arabidopsis thaliana (Mouse-ear cress).